A 133-amino-acid polypeptide reads, in one-letter code: Cytochrome c' (133 aa).

Residues Arg-12, Thr-72, Cys-122, Cys-125, and His-126 each coordinate heme c.

In terms of processing, binds 1 heme c group covalently per subunit.

Its function is as follows. Cytochrome c' is the most widely occurring bacterial c-type cytochrome. Cytochromes c' are high-spin proteins and the heme has no sixth ligand. Their exact function is not known. This is Cytochrome c' from Rhodocyclus tenuis (Rhodospirillum tenue).